A 73-amino-acid polypeptide reads, in one-letter code: Probable cytochrome b-c1 complex subunit 8 (73 aa).

At Met-1–Asn-42 the chain is on the mitochondrial matrix side. Residues Phe-43–Ala-60 form a helical membrane-spanning segment. Over Asn-61–Tyr-73 the chain is Mitochondrial intermembrane.

Belongs to the UQCRQ/QCR8 family. In terms of assembly, component of the ubiquinol-cytochrome c oxidoreductase (cytochrome b-c1 complex, complex III, CIII), a multisubunit enzyme composed of 3 respiratory subunits cytochrome b, cytochrome c1 and Rieske protein, 2 core protein subunits, and additional low-molecular weight protein subunits. The complex exists as an obligatory dimer and forms supercomplexes (SCs) in the inner mitochondrial membrane with cytochrome c oxidase (complex IV, CIV).

Its subcellular location is the mitochondrion inner membrane. Functionally, component of the ubiquinol-cytochrome c oxidoreductase, a multisubunit transmembrane complex that is part of the mitochondrial electron transport chain which drives oxidative phosphorylation. The respiratory chain contains 3 multisubunit complexes succinate dehydrogenase (complex II, CII), ubiquinol-cytochrome c oxidoreductase (cytochrome b-c1 complex, complex III, CIII) and cytochrome c oxidase (complex IV, CIV), that cooperate to transfer electrons derived from NADH and succinate to molecular oxygen, creating an electrochemical gradient over the inner membrane that drives transmembrane transport and the ATP synthase. The cytochrome b-c1 complex catalyzes electron transfer from ubiquinol to cytochrome c, linking this redox reaction to translocation of protons across the mitochondrial inner membrane, with protons being carried across the membrane as hydrogens on the quinol. In the process called Q cycle, 2 protons are consumed from the matrix, 4 protons are released into the intermembrane space and 2 electrons are passed to cytochrome c. This is Probable cytochrome b-c1 complex subunit 8 from Dictyostelium discoideum (Social amoeba).